The sequence spans 660 residues: MSAIESVLHERRQFAPPAAVEKAAAISGMAAYRALAEEAERDYEGFWARLARETLEWRKPFGKVLDETNAPFYKWFEDGELNASYNCLDRHVAAGLGERVAVIFEADDGTVTRVTYADLLARVSRFANALKKRGVGRGDRVVIYIPMSVEGIVAMQACARIGATHSVVFGGFSSKSLHERIVDVGATALVTADEQMRGGKTLPLKSIADEALAMGGCDAVKTVVVYRRTGGNVDWHAGRDVWMHEMVANESDACEPEWVGAEHPLFILYTSGSTGKPKGVQHSTAGYLLWVAQTMKWTFDWKPDDVFWCTADIGWVTGHSYITYGPLAVGATQVVFEGVPTYPNAGRFWKMIGDHKVTVFYTAPTAIRSLIKAAEADDRVHPRSYDLSSLRIIGTVGEPINPEAWIWYHKNVGQARCPIVDTWWQTETGGHMITPLPGATPTVPGSCTLPLPGIMAAVVDETGQDVPNGQGGILVVKRPWPAMARTIWGDPERFKKSYFPEELGGRLYLAGDGTVRDKETGYFTIMGRIDDVLNVSGHRLGTMEIESALVSHELVAEAAVVGRPDDTTGEAVVAFVVLKRSRPEGEEAAALAKTLRDWVGKEIGPIAKPKDIRFGDNLPKTRSGKIMRRLLRSLAKGEAITQDTSTLENPAILEQLAEVR.

CoA is bound by residues 197 to 200 (RGGK) and threonine 317. Residues 397–399 (GEP), 421–426 (DTWWQT), aspartate 512, and arginine 528 each bind ATP. Residue serine 536 participates in CoA binding. Arginine 539 is an ATP binding site. Mg(2+)-binding residues include valine 550, histidine 552, and valine 555. Position 625 is an N6-acetyllysine (lysine 625).

This sequence belongs to the ATP-dependent AMP-binding enzyme family. Requires Mg(2+) as cofactor. Post-translationally, acetylated. Deacetylation by the SIR2-homolog deacetylase activates the enzyme.

The catalysed reaction is acetate + ATP + CoA = acetyl-CoA + AMP + diphosphate. Functionally, catalyzes the conversion of acetate into acetyl-CoA (AcCoA), an essential intermediate at the junction of anabolic and catabolic pathways. AcsA undergoes a two-step reaction. In the first half reaction, AcsA combines acetate with ATP to form acetyl-adenylate (AcAMP) intermediate. In the second half reaction, it can then transfer the acetyl group from AcAMP to the sulfhydryl group of CoA, forming the product AcCoA. The sequence is that of Acetyl-coenzyme A synthetase from Burkholderia mallei (strain NCTC 10247).